Consider the following 229-residue polypeptide: Zinc finger matrin-type protein 4 (229 aa).

4 consecutive Matrin-type zinc fingers follow at residues 14–44 (SYCK…KVRL), 72–106 (DKNK…LKLL), 145–175 (RYCG…NAAR), and 198–228 (YRCT…NLKN).

It is found in the nucleus. The polypeptide is Zinc finger matrin-type protein 4 (Zmat4) (Mus musculus (Mouse)).